Here is a 117-residue protein sequence, read N- to C-terminus: UPF0295 protein GK0479 (117 aa).

2 helical membrane passes run 12–32 and 42–62; these read IRTF…LGLF and LFML…FWIG.

Belongs to the UPF0295 family.

It localises to the cell membrane. The sequence is that of UPF0295 protein GK0479 from Geobacillus kaustophilus (strain HTA426).